Reading from the N-terminus, the 834-residue chain is Phenylalanine--tRNA ligase beta subunit (834 aa).

The region spanning Gly48–Asn159 is the tRNA-binding domain. The 82-residue stretch at Pro411–Ser492 folds into the B5 domain. Residues Asp470, Asp476, Glu479, and Glu480 each contribute to the Mg(2+) site. Residues Ser740–Arg833 form the FDX-ACB domain.

It belongs to the phenylalanyl-tRNA synthetase beta subunit family. Type 1 subfamily. Tetramer of two alpha and two beta subunits. It depends on Mg(2+) as a cofactor.

It localises to the cytoplasm. It catalyses the reaction tRNA(Phe) + L-phenylalanine + ATP = L-phenylalanyl-tRNA(Phe) + AMP + diphosphate + H(+). The polypeptide is Phenylalanine--tRNA ligase beta subunit (Nocardia farcinica (strain IFM 10152)).